We begin with the raw amino-acid sequence, 413 residues long: Histidine--tRNA ligase (413 aa).

This sequence belongs to the class-II aminoacyl-tRNA synthetase family. As to quaternary structure, homodimer.

The protein resides in the cytoplasm. It catalyses the reaction tRNA(His) + L-histidine + ATP = L-histidyl-tRNA(His) + AMP + diphosphate + H(+). In Ehrlichia canis (strain Jake), this protein is Histidine--tRNA ligase.